The chain runs to 2293 residues: Protein Ycf2 B (2293 aa).

1647–1654 (GSIGTGRS) provides a ligand contact to ATP.

Belongs to the Ycf2 family.

Its subcellular location is the plastid. It is found in the chloroplast stroma. Functionally, probable ATPase of unknown function. Its presence in a non-photosynthetic plant (Epifagus virginiana) and experiments in tobacco indicate that it has an essential function which is probably not related to photosynthesis. This is Protein Ycf2 B from Crucihimalaya wallichii (Rock-cress).